Here is a 342-residue protein sequence, read N- to C-terminus: 4-hydroxythreonine-4-phosphate dehydrogenase (342 aa).

His140 and Thr141 together coordinate substrate. Residues His175, His220, and His275 each coordinate a divalent metal cation. Lys283, Asn292, and Arg301 together coordinate substrate.

Belongs to the PdxA family. In terms of assembly, homodimer. Zn(2+) is required as a cofactor. The cofactor is Mg(2+). Co(2+) serves as cofactor.

It localises to the cytoplasm. It catalyses the reaction 4-(phosphooxy)-L-threonine + NAD(+) = 3-amino-2-oxopropyl phosphate + CO2 + NADH. It functions in the pathway cofactor biosynthesis; pyridoxine 5'-phosphate biosynthesis; pyridoxine 5'-phosphate from D-erythrose 4-phosphate: step 4/5. In terms of biological role, catalyzes the NAD(P)-dependent oxidation of 4-(phosphooxy)-L-threonine (HTP) into 2-amino-3-oxo-4-(phosphooxy)butyric acid which spontaneously decarboxylates to form 3-amino-2-oxopropyl phosphate (AHAP). The sequence is that of 4-hydroxythreonine-4-phosphate dehydrogenase from Rhizobium meliloti (strain 1021) (Ensifer meliloti).